The sequence spans 87 residues: Cell division topological specificity factor (87 aa).

It belongs to the MinE family.

Its function is as follows. Prevents the cell division inhibition by proteins MinC and MinD at internal division sites while permitting inhibition at polar sites. This ensures cell division at the proper site by restricting the formation of a division septum at the midpoint of the long axis of the cell. This chain is Cell division topological specificity factor, found in Clostridium botulinum (strain ATCC 19397 / Type A).